The following is a 311-amino-acid chain: Alpha/beta hydrolase domain-containing protein 17C (311 aa).

The interval 48–67 (EAPASTAQQPPREEGSGEPA) is disordered. Residues serine 193, aspartate 258, and histidine 287 each act as charge relay system in the active site.

The protein belongs to the AB hydrolase superfamily. ABHD17 family. In terms of processing, palmitoylated on cysteine residues located in a cysteine cluster at the N-terminus which promotes membrane localization.

The protein resides in the recycling endosome membrane. It is found in the cell projection. The protein localises to the dendritic spine. Its subcellular location is the postsynaptic density membrane. The enzyme catalyses S-hexadecanoyl-L-cysteinyl-[protein] + H2O = L-cysteinyl-[protein] + hexadecanoate + H(+). Hydrolyzes fatty acids from S-acylated cysteine residues in proteins. Has depalmitoylating activity towards NRAS. The polypeptide is Alpha/beta hydrolase domain-containing protein 17C (Xenopus laevis (African clawed frog)).